Consider the following 35-residue polypeptide: Toxin Ado1 (35 aa).

3 disulfide bridges follow: cysteine 5–cysteine 20, cysteine 12–cysteine 25, and cysteine 19–cysteine 32.

It localises to the secreted. In terms of biological role, binds reversibly and blocks P/Q-type voltage-gated calcium channels (Cav). This chain is Toxin Ado1, found in Agriosphodrus dohrni (Japanese assassin-bug).